A 766-amino-acid polypeptide reads, in one-letter code: Ubiquitin carboxyl-terminal hydrolase creB (766 aa).

The disordered stretch occupies residues 1–32 (MGSFLKSFRKDVGSAAPSVGAPPAKKEPQPLP). Residues 13–23 (GSAAPSVGAPP) are compositionally biased toward low complexity. One can recognise a USP domain in the interval 55-466 (YGMENFGNTC…CAYVLFYQET (412 aa)). The active-site Nucleophile is the cysteine 64. Disordered stretches follow at residues 115 to 145 (EALA…KDSP) and 243 to 266 (ESPQ…SRTP). The span at 249-263 (SDVSDSVIPSSSSGS) shows a compositional bias: low complexity. The active-site Proton acceptor is histidine 417. The interval 526–752 (APTAPQLSTH…HDRSSHGKWR (227 aa)) is disordered. Over residues 548–572 (SPAPDPAPLTSLPPIPPIPETPPAP) the composition is skewed to pro residues. Residues 573–620 (LTSRKSDLQSKKERVKEEKERKAAEKEKEKQRRKEIETRLKDRQRRED) adopt a coiled-coil conformation. Basic and acidic residues-rich tracts occupy residues 576–643 (RKSD…RNHA) and 734–747 (EQEH…DRSS).

It belongs to the peptidase C19 family. In terms of assembly, interacts with creA, creC and qutD.

The catalysed reaction is Thiol-dependent hydrolysis of ester, thioester, amide, peptide and isopeptide bonds formed by the C-terminal Gly of ubiquitin (a 76-residue protein attached to proteins as an intracellular targeting signal).. Its function is as follows. Ubiquitin thioesterase component of the regulatory network controlling carbon source utilization through ubiquitination and deubiquitination involving creA, creB, creC, creD and acrB. Deubiquitinates the creA catabolic repressor and the quinate permease qutD. Also plays a role in response to carbon starvation and the control of extracellular proteases activity. The chain is Ubiquitin carboxyl-terminal hydrolase creB (creB) from Emericella nidulans (strain FGSC A4 / ATCC 38163 / CBS 112.46 / NRRL 194 / M139) (Aspergillus nidulans).